Here is a 624-residue protein sequence, read N- to C-terminus: tRNA uridine 5-carboxymethylaminomethyl modification enzyme MnmG (624 aa).

Residues 13 to 18, valine 125, and serine 180 contribute to the FAD site; that span reads GGGHAG. 273–287 serves as a coordination point for NAD(+); sequence GPRYCPSIEDKIVRF. Glutamine 370 contributes to the FAD binding site.

Belongs to the MnmG family. In terms of assembly, homodimer. Heterotetramer of two MnmE and two MnmG subunits. It depends on FAD as a cofactor.

It localises to the cytoplasm. Functionally, NAD-binding protein involved in the addition of a carboxymethylaminomethyl (cmnm) group at the wobble position (U34) of certain tRNAs, forming tRNA-cmnm(5)s(2)U34. The chain is tRNA uridine 5-carboxymethylaminomethyl modification enzyme MnmG from Legionella pneumophila (strain Corby).